A 256-amino-acid polypeptide reads, in one-letter code: Acetyl-coenzyme A carboxylase carboxyl transferase subunit alpha (256 aa).

One can recognise a CoA carboxyltransferase C-terminal domain in the interval 1–236 (MTDVARILKE…KEHLKTEINQ (236 aa)).

Belongs to the AccA family. In terms of assembly, acetyl-CoA carboxylase is a heterohexamer composed of biotin carboxyl carrier protein (AccB), biotin carboxylase (AccC) and two subunits each of ACCase subunit alpha (AccA) and ACCase subunit beta (AccD).

The protein resides in the cytoplasm. The enzyme catalyses N(6)-carboxybiotinyl-L-lysyl-[protein] + acetyl-CoA = N(6)-biotinyl-L-lysyl-[protein] + malonyl-CoA. It participates in lipid metabolism; malonyl-CoA biosynthesis; malonyl-CoA from acetyl-CoA: step 1/1. In terms of biological role, component of the acetyl coenzyme A carboxylase (ACC) complex. First, biotin carboxylase catalyzes the carboxylation of biotin on its carrier protein (BCCP) and then the CO(2) group is transferred by the carboxyltransferase to acetyl-CoA to form malonyl-CoA. This is Acetyl-coenzyme A carboxylase carboxyl transferase subunit alpha from Streptococcus uberis (strain ATCC BAA-854 / 0140J).